The chain runs to 315 residues: ATP synthase gamma chain (315 aa).

F-type ATPases have 2 components, CF(1) - the catalytic core - and CF(0) - the membrane proton channel. CF(1) has five subunits: alpha(3), beta(3), gamma(1), delta(1), epsilon(1). CF(0) has four main subunits: a(1), b(1), b'(1) and c(9-12).

It localises to the cellular thylakoid membrane. Its function is as follows. Produces ATP from ADP in the presence of a proton gradient across the membrane. The gamma chain is believed to be important in regulating ATPase activity and the flow of protons through the CF(0) complex. Functionally, the complex from the organism is particularly stable to disruption and remains functional after 6 hrs at 55 degrees Celsius. This Thermosynechococcus vestitus (strain NIES-2133 / IAM M-273 / BP-1) protein is ATP synthase gamma chain.